Consider the following 156-residue polypeptide: Large ribosomal subunit protein uL30 (156 aa).

Belongs to the universal ribosomal protein uL30 family. In terms of assembly, part of the 50S ribosomal subunit.

The protein is Large ribosomal subunit protein uL30 of Sulfolobus acidocaldarius (strain ATCC 33909 / DSM 639 / JCM 8929 / NBRC 15157 / NCIMB 11770).